The following is a 406-amino-acid chain: Heparan sulfate glucosamine 3-O-sulfotransferase 3A1 (406 aa).

Residues M1–K24 are Cytoplasmic-facing. Residues F25–A43 traverse the membrane as a helical; Signal-anchor for type II membrane protein segment. Residues E44–G406 lie on the Lumenal side of the membrane. A compositionally biased stretch (basic residues) spans Q92–P102. The interval Q92–A134 is disordered. Residues D107–S117 are compositionally biased toward acidic residues. Positions L120–A129 are enriched in gly residues. K162 to R166 provides a ligand contact to 3'-phosphoadenylyl sulfate. Substrate is bound by residues R166, E184–R190, and K215–S218. Residues R243 and S251 each contribute to the 3'-phosphoadenylyl sulfate site. Residue Q255 to K259 coordinates substrate. N273 carries an N-linked (GlcNAc...) asparagine glycan. W283–S284 is a substrate binding site. A glycan (N-linked (GlcNAc...) asparagine) is linked at N344. C351 and C363 are joined by a disulfide. Residue T367 to R370 participates in substrate binding. K368–H372 is a 3'-phosphoadenylyl sulfate binding site.

This sequence belongs to the sulfotransferase 1 family. Ubiquitous. Most abundant in heart and placenta, followed by liver and kidney.

Its subcellular location is the golgi apparatus membrane. It carries out the reaction alpha-D-glucosaminyl-[heparan sulfate](n) + 3'-phosphoadenylyl sulfate = 3-sulfo-alpha-D-glucosaminyl-[heparan sulfate](n) + adenosine 3',5'-bisphosphate + H(+). Sulfotransferase that utilizes 3'-phospho-5'-adenylyl sulfate (PAPS) to catalyze the transfer of a sulfo group to an N-unsubstituted glucosamine linked to a 2-O-sulfo iduronic acid unit on heparan sulfate. Catalyzes the O-sulfation of glucosamine in IdoUA2S-GlcNS and also in IdoUA2S-GlcNH2. The substrate-specific O-sulfation generates an enzyme-modified heparan sulfate which acts as a binding receptor to Herpes simplex virus-1 (HSV-1) and permits its entry. Unlike HS3ST1/3-OST-1, does not convert non-anticoagulant heparan sulfate to anticoagulant heparan sulfate. The polypeptide is Heparan sulfate glucosamine 3-O-sulfotransferase 3A1 (HS3ST3A1) (Homo sapiens (Human)).